The sequence spans 378 residues: MADFYDTLGVNRNADADSLKRAYRRLARQYHPDINKEAGAEERFKEIGRAYEVLGDPEKRARYDQFGEAGLGGSAGMPDMGDMGGFADIFETFFSGFGGPGSSGARTQRRGPQQGDDLRYDLTIDFNQAVFGQEREIKIPHLETCDVCRGTGAKPGTGPTTCSTCGGAGQVRRATRTPFGSFTQVSDCPTCSGSGQVISDSCQSCGGQGVKQVRKKLRINIPAGVDTGTRLRVSGEGNAGPRGGPSGDLYVFLKVKSHARLKRDGLNIHSEVNVSYLQAILGDTIEVDTVDGPTTLQIPSGTQPSAVLILDNKGIPKLGNPVARGNHCISVNIKIPSRLTDDEKILLEKLAIYYSAKGPQNHHHNSGLFSRLFKSNAS.

The J domain occupies 3-67 (DFYDTLGVNR…EKRARYDQFG (65 aa)). The CR-type zinc-finger motif lies at 132–214 (GQEREIKIPH…CGGQGVKQVR (83 aa)). Zn(2+)-binding residues include Cys145, Cys148, Cys162, Cys165, Cys188, Cys191, Cys202, and Cys205. CXXCXGXG motif repeat units lie at residues 145 to 152 (CDVCRGTG), 162 to 169 (CSTCGGAG), 188 to 195 (CPTCSGSG), and 202 to 209 (CQSCGGQG).

It belongs to the DnaJ family. Homodimer. Zn(2+) serves as cofactor.

The protein localises to the cytoplasm. Functionally, participates actively in the response to hyperosmotic and heat shock by preventing the aggregation of stress-denatured proteins and by disaggregating proteins, also in an autonomous, DnaK-independent fashion. Unfolded proteins bind initially to DnaJ; upon interaction with the DnaJ-bound protein, DnaK hydrolyzes its bound ATP, resulting in the formation of a stable complex. GrpE releases ADP from DnaK; ATP binding to DnaK triggers the release of the substrate protein, thus completing the reaction cycle. Several rounds of ATP-dependent interactions between DnaJ, DnaK and GrpE are required for fully efficient folding. Also involved, together with DnaK and GrpE, in the DNA replication of plasmids through activation of initiation proteins. The chain is Chaperone protein DnaJ from Prochlorococcus marinus (strain SARG / CCMP1375 / SS120).